The chain runs to 487 residues: Berbamunine synthase (487 aa).

Cys429 provides a ligand contact to heme.

Belongs to the cytochrome P450 family. Heme serves as cofactor.

The protein resides in the endoplasmic reticulum membrane. Its subcellular location is the microsome membrane. The enzyme catalyses (R)-N-methylcoclaurine + (S)-N-methylcoclaurine + reduced [NADPH--hemoprotein reductase] + O2 = berbamunine + oxidized [NADPH--hemoprotein reductase] + 2 H2O + H(+). It participates in alkaloid biosynthesis; berbamunine biosynthesis; berbamunine from (R)-N-methylcoclaurine and (S)-N-methylcoclaurine: step 1/1. In terms of biological role, forms the bisbenzylisoquinoline alkaloid berbamunine by phenol oxidation of N-methylcoclaurine without the incorporation of oxygen into the product. Oxidatively couples either two molecules of (R)-N-methylcoclaurine to form the (R,R) dimer guattegaumerine or one molecule each of (R)- and (S)-N-methylcoclaurine to form the (R,S) dimer berbamunine. The protein is Berbamunine synthase (CYP80A1) of Berberis stolonifera (Barberry).